Reading from the N-terminus, the 632-residue chain is Mitochondrial distribution and morphology protein 34 (632 aa).

Residues 1-203 (MSFKVNWNSL…LPTLIHQLSL (203 aa)) form the SMP-LTD domain. 2 disordered regions span residues 221 to 253 (ANASTSSSSTSSTSSSTTSSSSSSSPSSFTSSL) and 384 to 435 (KPKR…SSTL). Over residues 224-252 (STSSSSTSSTSSSTTSSSSSSSPSSFTSS) the composition is skewed to low complexity. Positions 384-400 (KPKRRVIRLGKSKNKSK) are enriched in basic residues. Over residues 401–412 (SKTETKTEHNDE) the composition is skewed to basic and acidic residues. Low complexity predominate over residues 422-435 (PLSSTPASSSSSTL).

This sequence belongs to the MDM34 family. In terms of assembly, component of the ER-mitochondria encounter structure (ERMES) or MDM complex, composed of MMM1, MDM10, MDM12 and MDM34.

It localises to the mitochondrion outer membrane. Its function is as follows. Component of the ERMES/MDM complex, which serves as a molecular tether to connect the endoplasmic reticulum (ER) and mitochondria. Components of this complex are involved in the control of mitochondrial shape and protein biogenesis, and function in nonvesicular lipid trafficking between the ER and mitochondria. MDM34 is required for the interaction of the ER-resident membrane protein MMM1 and the outer mitochondrial membrane-resident beta-barrel protein MDM10. The chain is Mitochondrial distribution and morphology protein 34 from Lodderomyces elongisporus (strain ATCC 11503 / CBS 2605 / JCM 1781 / NBRC 1676 / NRRL YB-4239) (Yeast).